A 1712-amino-acid polypeptide reads, in one-letter code: Probable ATP-dependent RNA helicase DDX60 (1712 aa).

One can recognise a Helicase ATP-binding domain in the interval 772–939 (LDVVDKNESA…WLQSVKWYWK (168 aa)). 785–792 (APTSSGKT) contacts ATP. The short motif at 889 to 892 (DEVH) is the DEVH box element. Residues 1226-1370 (YADQKAVDTE…HFPLSITLVL (145 aa)) enclose the Helicase C-terminal domain.

It belongs to the helicase family. In terms of assembly, interacts with EXOSC1, EXOSC4, RIGI, IFIH1/MDA5 and DHX58/LGP2. In terms of tissue distribution, brain, lymph node, prostate, stomach, thyroid, tongue, trachea, uterus, skeletal muscle, spleen, kidney, liver and small intestine.

The protein resides in the cytoplasm. The catalysed reaction is ATP + H2O = ADP + phosphate + H(+). In terms of biological role, positively regulates RIGI- and IFIH1/MDA5-dependent type I interferon and interferon inducible gene expression in response to viral infection. Binds ssRNA, dsRNA and dsDNA and can promote the binding of RIGI to dsRNA. Exhibits antiviral activity against hepatitis C virus and vesicular stomatitis virus (VSV). The polypeptide is Probable ATP-dependent RNA helicase DDX60 (DDX60) (Homo sapiens (Human)).